The following is a 199-amino-acid chain: Probable chemoreceptor glutamine deamidase CheD (199 aa).

Belongs to the CheD family.

The catalysed reaction is L-glutaminyl-[protein] + H2O = L-glutamyl-[protein] + NH4(+). In terms of biological role, probably deamidates glutamine residues to glutamate on methyl-accepting chemotaxis receptors (MCPs), playing an important role in chemotaxis. In Nitratidesulfovibrio vulgaris (strain ATCC 29579 / DSM 644 / CCUG 34227 / NCIMB 8303 / VKM B-1760 / Hildenborough) (Desulfovibrio vulgaris), this protein is Probable chemoreceptor glutamine deamidase CheD.